Here is a 417-residue protein sequence, read N- to C-terminus: Testis-specific Y-encoded-like protein 5 (417 aa).

Residues 1 to 25 (MSGRSRGRKSSRAKNRGKGRAKARV) are compositionally biased toward basic residues. 4 disordered regions span residues 1–55 (MSGR…QVQA), 93–112 (AAGD…AASL), 127–202 (GTVG…EGSM), and 391–417 (KGKE…SQSN). The segment covering 27–37 (PAPDDAPRDPD) has biased composition (basic and acidic residues). Residues 93–103 (AAGDHGQAAAR) show a composition bias toward low complexity. Over residues 182 to 191 (GEEKKEERDA) the composition is skewed to basic and acidic residues. A compositionally biased stretch (polar residues) spans 406–417 (METTQPGVSQSN).

Belongs to the nucleosome assembly protein (NAP) family. Interacts with USP7.

Its function is as follows. Involved in modulation of cell growth and cellular response to gamma radiation probably via regulation of the Akt signaling pathway. Involved in regulation of p53/TP53. Suppresses p53/TP53 protein levels and promotes its ubiquitination; the function is dependent on USP7 and independent on MDM2. Proposed to displace p53/TP53 from interaction with USP7. This is Testis-specific Y-encoded-like protein 5 (TSPYL5) from Homo sapiens (Human).